We begin with the raw amino-acid sequence, 65 residues long: Large ribosomal subunit protein bL35 (65 aa).

The disordered stretch occupies residues 1–25 (MPKMKSHRGAAKRFKKTGTGKLKRA).

This sequence belongs to the bacterial ribosomal protein bL35 family.

The polypeptide is Large ribosomal subunit protein bL35 (Clostridium botulinum (strain Alaska E43 / Type E3)).